Reading from the N-terminus, the 160-residue chain is Nucleotide-binding protein Ping_2261 (160 aa).

The protein belongs to the YajQ family.

In terms of biological role, nucleotide-binding protein. The chain is Nucleotide-binding protein Ping_2261 from Psychromonas ingrahamii (strain DSM 17664 / CCUG 51855 / 37).